The chain runs to 510 residues: MLQLVAACPESCVVCTKDVTLCHQLTYIVAAPMTTRVLIITDGYLSSIESTNLSLLFNLALLSLSRNGIEDVQEDALDGLTMLRTLLLEHNQISSSSLTDHTFSKLHSLQVLVLSNNALRTLRGSWFRNTRGLTRLQLDGNQITNLTDSSFGGTNLHSLRHLDLSNNFISYIGKDAFRPLPQLQEVDLSRNRLAHMPDVFTPLKQLIHLSLDKNQWSCTCDLHPLARFLRNYIKSSAHTLRNAKDLNCQPSTAAVAAAQSVLRLSETNCDPKAPNFTLVLKDRSPLLPGQDVALLTVLGFAGAVGLTCLGLVVFNWKLQQGKANEHTSENLCCRTFDEPLCAHGARNYHTKGYCNCHLTQENEIKVMSIVGSRKEMPLLQENSHQATSASESTTLDGSFRNLKKKDHGVGSTLFCQDGRLLHSRCSQSPGNTTAFNEAGLLTTYNSRKVQKLRNLESGEVLPQTLPHHIIRTEDISSDTFRRRYAIPTSALAGESLEKHLTNESCLHTLN.

LRR repeat units lie at residues 34-55, 58-79, 82-102, 108-129, 132-153, 158-179, and 182-203; these read TTRV…NLSL, NLAL…ALDG, MLRT…TDHT, SLQV…WFRN, GLTR…SFGG, SLRH…AFRP, and QLQE…FTPL. In terms of domain architecture, LRRCT spans 214–271; sequence NQWSCTCDLHPLARFLRNYIKSSAHTLRNAKDLNCQPSTAAVAAAQSVLRLSETNCDP. The chain crosses the membrane as a helical span at residues 294–314; it reads LLTVLGFAGAVGLTCLGLVVF.

The protein resides in the membrane. This Macaca fascicularis (Crab-eating macaque) protein is Leucine-rich repeat-containing protein 53 (LRRC53).